A 1092-amino-acid polypeptide reads, in one-letter code: Isoleucine--tRNA ligase (1092 aa).

The 'HIGH' region signature appears at 53 to 63 (PFANGLPHYGH). The short motif at 613–617 (KLSKR) is the 'KMSKS' region element. Residue Lys-616 coordinates ATP.

It belongs to the class-I aminoacyl-tRNA synthetase family. IleS type 2 subfamily. As to quaternary structure, monomer. Requires Zn(2+) as cofactor.

It is found in the cytoplasm. The catalysed reaction is tRNA(Ile) + L-isoleucine + ATP = L-isoleucyl-tRNA(Ile) + AMP + diphosphate. Its function is as follows. Catalyzes the attachment of isoleucine to tRNA(Ile). As IleRS can inadvertently accommodate and process structurally similar amino acids such as valine, to avoid such errors it has two additional distinct tRNA(Ile)-dependent editing activities. One activity is designated as 'pretransfer' editing and involves the hydrolysis of activated Val-AMP. The other activity is designated 'posttransfer' editing and involves deacylation of mischarged Val-tRNA(Ile). The protein is Isoleucine--tRNA ligase of Rickettsia peacockii (strain Rustic).